Consider the following 88-residue polypeptide: Probable small nuclear ribonucleoprotein F (88 aa).

The 73-residue stretch at 7–79 (NPKPFLNNLT…VLYVRGVPED (73 aa)) folds into the Sm domain.

Belongs to the snRNP Sm proteins family. SmF/LSm6 subfamily.

It localises to the nucleus. Its function is as follows. Probable common Sm protein, is found in U1 and U2 snRNPs and may be part of the spliceosome. This chain is Probable small nuclear ribonucleoprotein F, found in Arabidopsis thaliana (Mouse-ear cress).